The chain runs to 208 residues: N-(5'-phosphoribosyl)anthranilate isomerase (208 aa).

Belongs to the TrpF family.

The catalysed reaction is N-(5-phospho-beta-D-ribosyl)anthranilate = 1-(2-carboxyphenylamino)-1-deoxy-D-ribulose 5-phosphate. Its pathway is amino-acid biosynthesis; L-tryptophan biosynthesis; L-tryptophan from chorismate: step 3/5. The sequence is that of N-(5'-phosphoribosyl)anthranilate isomerase from Pyrococcus furiosus (strain ATCC 43587 / DSM 3638 / JCM 8422 / Vc1).